The primary structure comprises 973 residues: Translation initiation factor IF-2 (973 aa).

The span at 97 to 135 (GHIDLDGGQHKKQQEEPKAKEEPKVKEEPKVKEEPKVKE) shows a compositional bias: basic and acidic residues. Disordered stretches follow at residues 97 to 343 (GHID…EDVQ) and 353 to 372 (LTNKNNKNNKGAKYRRDKRD). A compositionally biased stretch (low complexity) spans 136–155 (APAAPAAQAPVKPAQPAQAP). Basic and acidic residues-rich tracts occupy residues 156–175 (TEKKEEKVIVVEVEKEKTVE), 183–204 (PKVESVKPEQEVEKTEEKDDNL), 212–224 (LESKIKVTGKIDL), and 237–250 (TKEEKRKERDEKQK). The segment covering 252-266 (NNNRPGNNSNGPGAP) has biased composition (low complexity). Basic and acidic residues-rich tracts occupy residues 315–326 (PNRDDRPNNDRK) and 333–343 (VKAEVSEEDVQ). The tr-type G domain occupies 472–642 (ARPPIVTVMG…LLEADLLDLK (171 aa)). Residues 481–488 (GHVDHGKT) are G1. Residue 481–488 (GHVDHGKT) participates in GTP binding. Residues 506–510 (GITQH) form a G2 region. The segment at 528-531 (DTPG) is G3. Residues 528–532 (DTPGH) and 582–585 (NKID) each bind GTP. The interval 582–585 (NKID) is G4. Residues 618–620 (SAK) form a G5 region.

This sequence belongs to the TRAFAC class translation factor GTPase superfamily. Classic translation factor GTPase family. IF-2 subfamily.

It localises to the cytoplasm. Functionally, one of the essential components for the initiation of protein synthesis. Protects formylmethionyl-tRNA from spontaneous hydrolysis and promotes its binding to the 30S ribosomal subunits. Also involved in the hydrolysis of GTP during the formation of the 70S ribosomal complex. The protein is Translation initiation factor IF-2 of Parabacteroides distasonis (strain ATCC 8503 / DSM 20701 / CIP 104284 / JCM 5825 / NCTC 11152).